A 414-amino-acid chain; its full sequence is Nuclear hormone receptor family member nhr-213 (414 aa).

Residues 21-99 (IVLCKVCALS…LGMTPENVQF (79 aa)) constitute a DNA-binding region (nuclear receptor). NR C4-type zinc fingers lie at residues 24 to 44 (CKVC…CRAC) and 62 to 82 (CKKG…CRLC). The NR LBD domain occupies 162 to 414 (SAAKKMNSLE…DFSDPDIFDC (253 aa)).

The protein belongs to the nuclear hormone receptor family.

It is found in the nucleus. Functionally, orphan nuclear receptor. This is Nuclear hormone receptor family member nhr-213 (nhr-213) from Caenorhabditis elegans.